Here is a 475-residue protein sequence, read N- to C-terminus: ATP synthase subunit beta (475 aa).

155-162 provides a ligand contact to ATP; sequence GGAGVGKT.

This sequence belongs to the ATPase alpha/beta chains family. In terms of assembly, F-type ATPases have 2 components, CF(1) - the catalytic core - and CF(0) - the membrane proton channel. CF(1) has five subunits: alpha(3), beta(3), gamma(1), delta(1), epsilon(1). CF(0) has three main subunits: a(1), b(2) and c(9-12). The alpha and beta chains form an alternating ring which encloses part of the gamma chain. CF(1) is attached to CF(0) by a central stalk formed by the gamma and epsilon chains, while a peripheral stalk is formed by the delta and b chains.

Its subcellular location is the cell inner membrane. The enzyme catalyses ATP + H2O + 4 H(+)(in) = ADP + phosphate + 5 H(+)(out). Functionally, produces ATP from ADP in the presence of a proton gradient across the membrane. The catalytic sites are hosted primarily by the beta subunits. This chain is ATP synthase subunit beta, found in Rhizobium etli (strain ATCC 51251 / DSM 11541 / JCM 21823 / NBRC 15573 / CFN 42).